The chain runs to 136 residues: uncharacterized protein (136 aa).

Its subcellular location is the cytoplasm. The protein resides in the nucleus. This is an uncharacterized protein from Schizosaccharomyces pombe (strain 972 / ATCC 24843) (Fission yeast).